The following is a 71-amino-acid chain: Pro-glucagon (71 aa).

Belongs to the glucagon family.

The protein localises to the secreted. In terms of biological role, plays a key role in glucose metabolism and homeostasis. Regulates blood glucose by increasing gluconeogenesis and decreasing glycolysis. In Ictalurus punctatus (Channel catfish), this protein is Pro-glucagon (gcg).